We begin with the raw amino-acid sequence, 272 residues long: MLTYPNIDPVAIHLGPLQVHWYGLMYLLAFLCAWGLASYRAKQRDGWTSDMVSDLVFYGALGVVLGGRIGYVLFYEFDKFLENPIWLFQVWTGGMSFHGGFLGVMIAMLFWCKKYQKTWFQTLDFIAPCVPTGLMFGRIGNFIGGELYGRAVTDPNYPFGMIFPTDPLHLVRHPSQIYQALCEGLLLFIILWWFSSKPRPRMAVSALFLMGYGVARFVMEFFRQPDADQGFILFGWMTKGQILTVPMLLIGLWMMWYAYQKKIYDWGPQKNS.

The next 7 membrane-spanning stretches (helical) occupy residues 17–37 (LQVH…WGLA), 55–75 (LVFY…VLFY), 90–110 (VWTG…AMLF), 125–145 (FIAP…FIGG), 174–194 (PSQI…LWWF), 202–222 (MAVS…MEFF), and 230–250 (GFIL…MLLI). Position 138 (arginine 138) interacts with a 1,2-diacyl-sn-glycero-3-phospho-(1'-sn-glycerol).

Belongs to the Lgt family.

Its subcellular location is the cell inner membrane. It carries out the reaction L-cysteinyl-[prolipoprotein] + a 1,2-diacyl-sn-glycero-3-phospho-(1'-sn-glycerol) = an S-1,2-diacyl-sn-glyceryl-L-cysteinyl-[prolipoprotein] + sn-glycerol 1-phosphate + H(+). The protein operates within protein modification; lipoprotein biosynthesis (diacylglyceryl transfer). Its function is as follows. Catalyzes the transfer of the diacylglyceryl group from phosphatidylglycerol to the sulfhydryl group of the N-terminal cysteine of a prolipoprotein, the first step in the formation of mature lipoproteins. The polypeptide is Phosphatidylglycerol--prolipoprotein diacylglyceryl transferase (Acinetobacter baumannii (strain ACICU)).